A 408-amino-acid chain; its full sequence is Adenylosuccinate synthetase (408 aa).

GTP is bound by residues 12–18 and 40–42; these read GDEGKGK and GHT. Aspartate 13 functions as the Proton acceptor in the catalytic mechanism. Aspartate 13 and glycine 40 together coordinate Mg(2+). Residues 13–16, 38–41, threonine 121, arginine 135, glutamine 213, threonine 228, and arginine 292 each bind IMP; these read DEGK and NAGH. Histidine 41 acts as the Proton donor in catalysis. 288–294 provides a ligand contact to substrate; the sequence is TTTGRPR. Residues arginine 294, 320-322, and 393-395 each bind GTP; these read KLD and STS.

Belongs to the adenylosuccinate synthetase family. In terms of assembly, homodimer. Mg(2+) is required as a cofactor.

It is found in the cytoplasm. It catalyses the reaction IMP + L-aspartate + GTP = N(6)-(1,2-dicarboxyethyl)-AMP + GDP + phosphate + 2 H(+). It participates in purine metabolism; AMP biosynthesis via de novo pathway; AMP from IMP: step 1/2. In terms of biological role, plays an important role in the de novo pathway of purine nucleotide biosynthesis. Catalyzes the first committed step in the biosynthesis of AMP from IMP. This Thermus thermophilus (strain ATCC BAA-163 / DSM 7039 / HB27) protein is Adenylosuccinate synthetase.